The primary structure comprises 272 residues: 2-amino-3,7-dideoxy-D-threo-hept-6-ulosonate synthase (272 aa).

Asp33 serves as the catalytic Proton acceptor. 1-deoxy-D-threo-hexo-2,5-diulose 6-phosphate contacts are provided by residues 33–37 (DHGVS) and 153–155 (YPR). Tyr153 (proton donor) is an active-site residue. Lys184 acts as the Schiff-base intermediate with substrate in catalysis. 1-deoxy-D-threo-hexo-2,5-diulose 6-phosphate-binding positions include 209–210 (GG) and 237–238 (GR).

This sequence belongs to the DeoC/FbaB aldolase family. ADHS subfamily. As to quaternary structure, homodecamer.

It carries out the reaction 1-deoxy-D-threo-hexo-2,5-diulose 6-phosphate + L-aspartate 4-semialdehyde = 2,3-dioxopropyl phosphate + 2-amino-2,3,7-trideoxy-D-lyxo-hept-6-ulosonate. Catalyzes a transaldol reaction between 6-deoxy-5-ketofructose 1-phosphate (DKFP) and L-aspartate semialdehyde (ASA) with an elimination of hydroxypyruvaldehyde phosphate to yield 2-amino-3,7-dideoxy-D-threo-hept-6-ulosonate (ADH). Plays a key role in an alternative pathway of the biosynthesis of 3-dehydroquinate (DHQ), which is involved in the canonical pathway for the biosynthesis of aromatic amino acids. This is 2-amino-3,7-dideoxy-D-threo-hept-6-ulosonate synthase from Methanococcus vannielii (strain ATCC 35089 / DSM 1224 / JCM 13029 / OCM 148 / SB).